The primary structure comprises 350 residues: Dihydroorotate dehydrogenase (quinone) (350 aa).

FMN contacts are provided by residues 67–71 and glycine 91; that span reads AGFDK. Substrate is bound at residue lysine 71. Position 116–120 (116–120) interacts with substrate; it reads NRMGL. Positions 144 and 177 each coordinate FMN. Asparagine 177 is a binding site for substrate. The active-site Nucleophile is cysteine 180. Position 182 (asparagine 182) interacts with substrate. FMN contacts are provided by lysine 213 and threonine 241. Position 242-243 (242-243) interacts with substrate; that stretch reads NT. The interval 245 to 265 is disordered; it reads TERPASLRSPNAVETGGLSGK. FMN-binding positions include glycine 264, glycine 291, and 312-313; that span reads YT.

Belongs to the dihydroorotate dehydrogenase family. Type 2 subfamily. In terms of assembly, monomer. Requires FMN as cofactor.

It localises to the cell membrane. The catalysed reaction is (S)-dihydroorotate + a quinone = orotate + a quinol. Its pathway is pyrimidine metabolism; UMP biosynthesis via de novo pathway; orotate from (S)-dihydroorotate (quinone route): step 1/1. Catalyzes the conversion of dihydroorotate to orotate with quinone as electron acceptor. This Haloarcula marismortui (strain ATCC 43049 / DSM 3752 / JCM 8966 / VKM B-1809) (Halobacterium marismortui) protein is Dihydroorotate dehydrogenase (quinone) (pyrD).